We begin with the raw amino-acid sequence, 492 residues long: NAD(P)H-quinone oxidoreductase subunit 2 A, chloroplastic (492 aa).

Transmembrane regions (helical) follow at residues 6–26 (LLLFDGSLIFPECILIFGLIL), 39–59 (ISWFYFISSTSLVMSITALLF), 81–101 (IFQFLILLCSTLCIPLSVEYI), 106–126 (MAITEFLLFILTTTLGGMFLC), 131–151 (LITIFVALECFSLCSYLLSGY), 165–185 (YLLMGGASSSILVHGFSWLYG), 209–229 (PGILIALLFITVGIGFKLSPA), 277–297 (WHLLLEILAILSMILGNLIAI), 305–325 (MLAYSSIGQIGYVIIGIIVGD), 336–356 (YMLFYISMNLGTFACIVSFGL), 377–397 (ALSLALCLLSLGGLPPLAGFF), 400–420 (LHLFWCGWQAGLYFLVSIGLL), and 464–484 (FSMIVCVIASTIPGISMNPII).

This sequence belongs to the complex I subunit 2 family. NDH is composed of at least 16 different subunits, 5 of which are encoded in the nucleus.

The protein resides in the plastid. It localises to the chloroplast thylakoid membrane. The enzyme catalyses a plastoquinone + NADH + (n+1) H(+)(in) = a plastoquinol + NAD(+) + n H(+)(out). The catalysed reaction is a plastoquinone + NADPH + (n+1) H(+)(in) = a plastoquinol + NADP(+) + n H(+)(out). Functionally, NDH shuttles electrons from NAD(P)H:plastoquinone, via FMN and iron-sulfur (Fe-S) centers, to quinones in the photosynthetic chain and possibly in a chloroplast respiratory chain. The immediate electron acceptor for the enzyme in this species is believed to be plastoquinone. Couples the redox reaction to proton translocation, and thus conserves the redox energy in a proton gradient. The chain is NAD(P)H-quinone oxidoreductase subunit 2 A, chloroplastic from Phaseolus vulgaris (Kidney bean).